We begin with the raw amino-acid sequence, 223 residues long: MDTPFIITLDGPAGVGKSTLAKRLADRFEIAYLDTGAMFRGTAWKLGEGAWDWDADKLDQALKGLEFTLSGSGSNSTLSLNGTHLTDEIRTETVGMWASNMAKIPAVREYQKIAQRAIGETTSLIAEGRDMGTVIFPQAPCKFFLDADLEERAHRRFEQLKDMGKPADMAELIEQIAARDDQDRNRKVAPLKPAEDSIIVDTTHLDINGVFDKLVFETEKKVN.

11–19 (GPAGVGKST) is a binding site for ATP.

This sequence belongs to the cytidylate kinase family. Type 1 subfamily.

The protein localises to the cytoplasm. The enzyme catalyses CMP + ATP = CDP + ADP. It catalyses the reaction dCMP + ATP = dCDP + ADP. The sequence is that of Cytidylate kinase from Maridesulfovibrio salexigens (strain ATCC 14822 / DSM 2638 / NCIMB 8403 / VKM B-1763) (Desulfovibrio salexigens).